The following is a 463-amino-acid chain: Chromosomal replication initiator protein DnaA (463 aa).

The domain I, interacts with DnaA modulators stretch occupies residues 1–83; the sequence is MSLSLWQQCL…LRFEVGSKPI (83 aa). The interval 83–126 is domain II; that stretch reads IVPVAVSSAASSGASVPPAAVRASSLARPSWERVTAQPELSYRS. A domain III, AAA+ region region spans residues 127-343; the sequence is NVNPKHTFDN…GALNRVIANA (217 aa). Positions 171, 173, 174, and 175 each coordinate ATP. A domain IV, binds dsDNA region spans residues 344–463; the sequence is NFTGRAITID…FSNLIRTLSS (120 aa).

This sequence belongs to the DnaA family. Oligomerizes as a right-handed, spiral filament on DNA at oriC.

It is found in the cytoplasm. Its function is as follows. Plays an essential role in the initiation and regulation of chromosomal replication. ATP-DnaA binds to the origin of replication (oriC) to initiate formation of the DNA replication initiation complex once per cell cycle. Binds the DnaA box (a 9 base pair repeat at the origin) and separates the double-stranded (ds)DNA. Forms a right-handed helical filament on oriC DNA; dsDNA binds to the exterior of the filament while single-stranded (ss)DNA is stabiized in the filament's interior. The ATP-DnaA-oriC complex binds and stabilizes one strand of the AT-rich DNA unwinding element (DUE), permitting loading of DNA polymerase. After initiation quickly degrades to an ADP-DnaA complex that is not apt for DNA replication. Binds acidic phospholipids. This is Chromosomal replication initiator protein DnaA from Edwardsiella ictaluri (strain 93-146).